Consider the following 208-residue polypeptide: Large ribosomal subunit protein uL4 (208 aa).

The tract at residues 51-79 (AKERAEVSFSTKKLKKQKGTGGARAGSRK) is disordered.

It belongs to the universal ribosomal protein uL4 family. As to quaternary structure, part of the 50S ribosomal subunit.

Functionally, one of the primary rRNA binding proteins, this protein initially binds near the 5'-end of the 23S rRNA. It is important during the early stages of 50S assembly. It makes multiple contacts with different domains of the 23S rRNA in the assembled 50S subunit and ribosome. Forms part of the polypeptide exit tunnel. The polypeptide is Large ribosomal subunit protein uL4 (Cytophaga hutchinsonii (strain ATCC 33406 / DSM 1761 / CIP 103989 / NBRC 15051 / NCIMB 9469 / D465)).